Here is a 404-residue protein sequence, read N- to C-terminus: Formate-dependent phosphoribosylglycinamide formyltransferase (404 aa).

N(1)-(5-phospho-beta-D-ribosyl)glycinamide is bound by residues 25–26 and E85; that span reads EL. ATP contacts are provided by residues R118, K159, 164–169, 199–202, and E207; these read SSGKGQ and EGFI. One can recognise an ATP-grasp domain in the interval 123 to 318; the sequence is RLAAEELGLA…EFELHARAIL (196 aa). E277 and E289 together coordinate Mg(2+). N(1)-(5-phospho-beta-D-ribosyl)glycinamide-binding positions include D296, K365, and 372 to 373; that span reads RR.

The protein belongs to the PurK/PurT family. As to quaternary structure, homodimer.

It carries out the reaction N(1)-(5-phospho-beta-D-ribosyl)glycinamide + formate + ATP = N(2)-formyl-N(1)-(5-phospho-beta-D-ribosyl)glycinamide + ADP + phosphate + H(+). It functions in the pathway purine metabolism; IMP biosynthesis via de novo pathway; N(2)-formyl-N(1)-(5-phospho-D-ribosyl)glycinamide from N(1)-(5-phospho-D-ribosyl)glycinamide (formate route): step 1/1. Involved in the de novo purine biosynthesis. Catalyzes the transfer of formate to 5-phospho-ribosyl-glycinamide (GAR), producing 5-phospho-ribosyl-N-formylglycinamide (FGAR). Formate is provided by PurU via hydrolysis of 10-formyl-tetrahydrofolate. This is Formate-dependent phosphoribosylglycinamide formyltransferase from Burkholderia vietnamiensis (strain G4 / LMG 22486) (Burkholderia cepacia (strain R1808)).